Consider the following 1372-residue polypeptide: DNA-directed RNA polymerase subunit beta (1372 aa).

It belongs to the RNA polymerase beta chain family. As to quaternary structure, the RNAP catalytic core consists of 2 alpha, 1 beta, 1 beta' and 1 omega subunit. When a sigma factor is associated with the core the holoenzyme is formed, which can initiate transcription.

It carries out the reaction RNA(n) + a ribonucleoside 5'-triphosphate = RNA(n+1) + diphosphate. DNA-dependent RNA polymerase catalyzes the transcription of DNA into RNA using the four ribonucleoside triphosphates as substrates. The chain is DNA-directed RNA polymerase subunit beta from Psychrobacter cryohalolentis (strain ATCC BAA-1226 / DSM 17306 / VKM B-2378 / K5).